The following is a 296-amino-acid chain: MANVLCNRARLVSYLPGFCSLVKRVVNPKAFSTAGSSGSDESHVAAAPPDICSRTVWPDETMGPFGPQDQRFQLPGNIGFDCHLNGTASQKKSLVHKTLPDVLAEPLSSERHEFVMAQYVNEFQGNDAPVEQEINSAETYFESARVECAIQTCPELLRKDFESLFPEVANGKLMILTVTQKTKNDMTVWSEEVEIEREVLLEKFINGAKEICYALRAEGYWADFIDPSSGLAFFGPYTNNTLFETDERYRHLGFSVDDLGCCKVIRHSLWGTHVVVGSIFTNATPDSHIMKKLSGN.

The transit peptide at 1-38 (MANVLCNRARLVSYLPGFCSLVKRVVNPKAFSTAGSSG) directs the protein to the mitochondrion. Lysine 203 carries the post-translational modification N6-acetyllysine.

As to quaternary structure, heterodimer with MMACHC. Forms a multiprotein complex with MMACHC, MTR and MTRR. In terms of tissue distribution, widely expressed at high levels.

It localises to the cytoplasm. It is found in the mitochondrion. In terms of biological role, involved in cobalamin metabolism and trafficking. Plays a role in regulating the biosynthesis and the proportion of two coenzymes, methylcob(III)alamin (MeCbl) and 5'-deoxyadenosylcobalamin (AdoCbl). Promotes oxidation of cob(II)alamin bound to MMACHC. The processing of cobalamin in the cytosol occurs in a multiprotein complex composed of at least MMACHC, MMADHC, MTRR (methionine synthase reductase) and MTR (methionine synthase) which may contribute to shuttle safely and efficiently cobalamin towards MTR in order to produce methionine. The chain is Cobalamin trafficking protein CblD from Homo sapiens (Human).